The primary structure comprises 63 residues: Large ribosomal subunit protein bL28 (63 aa).

This sequence belongs to the bacterial ribosomal protein bL28 family.

The chain is Large ribosomal subunit protein bL28 from Syntrophotalea carbinolica (strain DSM 2380 / NBRC 103641 / GraBd1) (Pelobacter carbinolicus).